The following is a 76-amino-acid chain: Rhesus theta defensin-1/3 subunit A (76 aa).

The N-terminal stretch at M1–A22 is a signal peptide. Positions R23 to L64 are excised as a propeptide. Positions A25 to H45 are disordered. R65 participates in a covalent cross-link: Cyclopeptide (Arg-Cys) (interchain with C-73 in subunit A); in form RTD-3. Residue R65 forms a Cyclopeptide (Arg-Cys) (interchain with C-73 in subunit B); in form RTD-1 linkage. A disulfide bridge links C68 with C73. C73 is covalently cross-linked (Cyclopeptide (Cys-Arg) (interchain with R-65 in subunit A); in form RTD-3). C73 participates in a covalent cross-link: Cyclopeptide (Cys-Arg) (interchain with R-65 in subunit B); in form RTD-1. A propeptide spanning residues R74 to L76 is cleaved from the precursor.

The protein belongs to the alpha-defensin family. Theta subfamily. As to quaternary structure, RTD-1 is a cyclic heterodimer composed of subunits A and B; disulfide-linked. RTD-3 is a cyclic homodimer composed of two subunits A; disulfide-linked. In terms of processing, forms a cyclic peptide with subunit A (RTD-3) or with subunit B (RTD-1). An additional intersubunit disulfide bond is formed. In terms of tissue distribution, RTD-1 is expressed in bone marrow. Detected in promyelocytes, myelocytes and mature neutrophils and monocytes.

RTD-1 and RTD-3 have similar antimicrobial activities against the Gram-positive bacteria S.aureus 502A and L.monocytogenes, the Gram-negative bacteria S.typhimurium and E.coli ML35, and the fungi C.albicans 16820 and C.neoformans 271A. The sequence is that of Rhesus theta defensin-1/3 subunit A (RTD1A) from Macaca mulatta (Rhesus macaque).